We begin with the raw amino-acid sequence, 217 residues long: Histone H1C (217 aa).

Composition is skewed to low complexity over residues 1–11 and 28–45; these read MAETASTETTP and KKAA…PSAS. Disordered regions lie at residues 1-45 and 123-217; these read MAET…PSAS and VAKK…AAKK. An H15 domain is found at 40 to 113; sequence SGPSASELIV…GASGSFKLNK (74 aa). Composition is skewed to basic residues over residues 123–151 and 159–217; these read VAKK…KPKK and SPKK…AAKK.

This sequence belongs to the histone H1/H5 family.

The protein localises to the nucleus. It localises to the chromosome. In terms of biological role, histones H1 are necessary for the condensation of nucleosome chains into higher-order structures. The protein is Histone H1C of Xenopus laevis (African clawed frog).